The following is a 275-amino-acid chain: Ribosomal RNA small subunit methyltransferase A (275 aa).

6 residues coordinate S-adenosyl-L-methionine: N27, L29, G54, E76, D102, and N123.

This sequence belongs to the class I-like SAM-binding methyltransferase superfamily. rRNA adenine N(6)-methyltransferase family. RsmA subfamily.

The protein localises to the cytoplasm. The enzyme catalyses adenosine(1518)/adenosine(1519) in 16S rRNA + 4 S-adenosyl-L-methionine = N(6)-dimethyladenosine(1518)/N(6)-dimethyladenosine(1519) in 16S rRNA + 4 S-adenosyl-L-homocysteine + 4 H(+). Specifically dimethylates two adjacent adenosines (A1518 and A1519) in the loop of a conserved hairpin near the 3'-end of 16S rRNA in the 30S particle. May play a critical role in biogenesis of 30S subunits. The sequence is that of Ribosomal RNA small subunit methyltransferase A from Chelativorans sp. (strain BNC1).